The sequence spans 380 residues: Cytochrome b (380 aa).

The next 4 helical transmembrane spans lie at 33–53, 77–98, 113–133, and 178–198; these read FGSLLGLCLATQILTGLFLAM, WLIRNMHANGASFFFICIYLHI, WNVGVALFLLTMMTAFVGYVL, and FFAFHFLFPFVIAALTAIHLL. Heme b is bound by residues His-83 and His-97. Heme b contacts are provided by His-182 and His-196. His-201 lines the a ubiquinone pocket. 4 helical membrane-spanning segments follow: residues 226–246, 288–308, 320–340, and 347–367; these read YKDLLGFATLMVTLTSLALFS, LGGVLALLSSILILTAVPALH, ITQLLFWTLVAAVLVLTWIGG, and FIIIGQIASLLYFMLFLTLIP.

It belongs to the cytochrome b family. As to quaternary structure, the cytochrome bc1 complex contains 3 respiratory subunits (MT-CYB, CYC1 and UQCRFS1), 2 core proteins (UQCRC1 and UQCRC2) and probably 6 low-molecular weight proteins. Heme b serves as cofactor.

The protein resides in the mitochondrion inner membrane. Functionally, component of the ubiquinol-cytochrome c reductase complex (complex III or cytochrome b-c1 complex) that is part of the mitochondrial respiratory chain. The b-c1 complex mediates electron transfer from ubiquinol to cytochrome c. Contributes to the generation of a proton gradient across the mitochondrial membrane that is then used for ATP synthesis. The protein is Cytochrome b (mt-cyb) of Percopsis transmontana (Sand roller).